Reading from the N-terminus, the 294-residue chain is ATP synthase gamma chain (294 aa).

Belongs to the ATPase gamma chain family. In terms of assembly, F-type ATPases have 2 components, CF(1) - the catalytic core - and CF(0) - the membrane proton channel. CF(1) has five subunits: alpha(3), beta(3), gamma(1), delta(1), epsilon(1). CF(0) has three main subunits: a, b and c.

The protein resides in the cell inner membrane. In terms of biological role, produces ATP from ADP in the presence of a proton gradient across the membrane. The gamma chain is believed to be important in regulating ATPase activity and the flow of protons through the CF(0) complex. This chain is ATP synthase gamma chain, found in Campylobacter jejuni subsp. jejuni serotype O:23/36 (strain 81-176).